A 745-amino-acid chain; its full sequence is Fatty acid oxidation complex subunit alpha (745 aa).

The interval 47-209 (VNTLKAKFAE…KMGLVDDVVP (163 aa)) is enoyl-CoA hydratase. The 3-hydroxyacyl-CoA dehydrogenase stretch occupies residues 325 to 745 (RAIHRVGVLG…LDEAAITAHN (421 aa)).

The protein in the N-terminal section; belongs to the enoyl-CoA hydratase/isomerase family. It in the central section; belongs to the 3-hydroxyacyl-CoA dehydrogenase family. In terms of assembly, heterotetramer of two alpha chains (FadJ) and two beta chains (FadI).

It localises to the cytoplasm. It catalyses the reaction a (3S)-3-hydroxyacyl-CoA = a (2E)-enoyl-CoA + H2O. The catalysed reaction is a 4-saturated-(3S)-3-hydroxyacyl-CoA = a (3E)-enoyl-CoA + H2O. It carries out the reaction a (3S)-3-hydroxyacyl-CoA + NAD(+) = a 3-oxoacyl-CoA + NADH + H(+). The enzyme catalyses (3S)-3-hydroxybutanoyl-CoA = (3R)-3-hydroxybutanoyl-CoA. Its pathway is lipid metabolism; fatty acid beta-oxidation. Catalyzes the formation of a hydroxyacyl-CoA by addition of water on enoyl-CoA. Also exhibits 3-hydroxyacyl-CoA epimerase and 3-hydroxyacyl-CoA dehydrogenase activities. This chain is Fatty acid oxidation complex subunit alpha, found in Yersinia enterocolitica serotype O:8 / biotype 1B (strain NCTC 13174 / 8081).